Reading from the N-terminus, the 1293-residue chain is Phosphoribosylformylglycinamidine synthase (1293 aa).

Residues 305–316 (GAATGSGGEIRD) and Ala676 each bind ATP. Mg(2+) contacts are provided by Asp677, Glu716, Asn720, and Asp884. Residue Ser886 coordinates ATP. In terms of domain architecture, Glutamine amidotransferase type-1 spans 1040-1293 (MAILREQGVN…MFRNARVKLG (254 aa)). Cys1133 (nucleophile) is an active-site residue. Catalysis depends on residues His1258 and Glu1260.

This sequence in the N-terminal section; belongs to the FGAMS family. As to quaternary structure, monomer.

The protein localises to the cytoplasm. The enzyme catalyses N(2)-formyl-N(1)-(5-phospho-beta-D-ribosyl)glycinamide + L-glutamine + ATP + H2O = 2-formamido-N(1)-(5-O-phospho-beta-D-ribosyl)acetamidine + L-glutamate + ADP + phosphate + H(+). The protein operates within purine metabolism; IMP biosynthesis via de novo pathway; 5-amino-1-(5-phospho-D-ribosyl)imidazole from N(2)-formyl-N(1)-(5-phospho-D-ribosyl)glycinamide: step 1/2. In terms of biological role, phosphoribosylformylglycinamidine synthase involved in the purines biosynthetic pathway. Catalyzes the ATP-dependent conversion of formylglycinamide ribonucleotide (FGAR) and glutamine to yield formylglycinamidine ribonucleotide (FGAM) and glutamate. The sequence is that of Phosphoribosylformylglycinamidine synthase from Shewanella denitrificans (strain OS217 / ATCC BAA-1090 / DSM 15013).